We begin with the raw amino-acid sequence, 154 residues long: 3-dehydroquinate dehydratase (154 aa).

Tyr23 (proton acceptor) is an active-site residue. Asn74, His80, and Asp87 together coordinate substrate. His100 (proton donor) is an active-site residue. Residues 101–102 and Arg111 each bind substrate; that span reads LS.

This sequence belongs to the type-II 3-dehydroquinase family. Homododecamer.

The enzyme catalyses 3-dehydroquinate = 3-dehydroshikimate + H2O. It participates in metabolic intermediate biosynthesis; chorismate biosynthesis; chorismate from D-erythrose 4-phosphate and phosphoenolpyruvate: step 3/7. Its function is as follows. Catalyzes a trans-dehydration via an enolate intermediate. In Actinobacillus pleuropneumoniae serotype 5b (strain L20), this protein is 3-dehydroquinate dehydratase.